Consider the following 335-residue polypeptide: NmrA-like family domain-containing oxidoreductase ptmS (335 aa).

NADP(+) contacts are provided by residues 12–17, 39–43, 60–61, 81–88, K139, and 163–166; these read GATGNQ, RDPNS, DG, INSDDPVF, and FLEN. Residues 161-206 form an interaction with ASS1 region; it reads GYFLENFLFKQGAFIMGGFPWETDAEGYLTWKVPYWGGEEQIPFLS.

This sequence belongs to the NmrA-type oxidoreductase family.

Its pathway is secondary metabolite biosynthesis. Functionally, nmrA-like family domain-containing oxidoreductase; part of the gene cluster that mediates the biosynthesis of the indole diterpenes penitrems. The geranylgeranyl diphosphate (GGPP) synthase ptmG catalyzes the first step in penitrem biosynthesis via conversion of farnesyl pyrophosphate and isopentyl pyrophosphate into geranylgeranyl pyrophosphate (GGPP). Condensation of indole-3-glycerol phosphate with GGPP by the prenyl transferase ptmC then forms 3-geranylgeranylindole (3-GGI). Epoxidation by the FAD-dependent monooxygenase ptmM leads to a epoxidized-GGI that is substrate of the terpene cyclase ptmB for cyclization to yield paspaline. Paspaline is subsequently converted to 13-desoxypaxilline by the cytochrome P450 monooxygenase ptmP, the latter being then converted to paxilline by the cytochrome P450 monooxygenase ptmQ. Paxilline is converted to beta-paxitriol via C-10 ketoreduction by the short-chain dehydrogenase ptmH which can be monoprenylated at the C-20 by the indole diterpene prenyltransferase ptmD. A two-step elimination (acetylation and elimination) process performed by the O-acetyltransferase ptmV and ptmI leads to the production of the prenylated form of penijanthine. The FAD-linked oxidoreductase ptmO then converts the prenylated form of penijanthine into PC-M5 which is in turn transformed into PC-M4 by the aromatic dimethylallyltransferase ptmE. Five sequential oxidative transformations performed by the cytochrome P450 monooxygenases ptmK, ptmU, ptmL, ptmN and ptmJ yield the various penitrem compounds. PtmK, ptmU and ptmM are involved in the formation of the key bicyclic ring of penitrem C via the formation of the intermediates secopenitrem D and penitrem D. PtmL catalyzes the epoxidation of penitrem D and C to yield penitrem B and F, respectively. PtmJ catalyzes the last benzylic hydroxylation to convert penitrem B to prenitrem E and penitrem F to penitrem A. This chain is NmrA-like family domain-containing oxidoreductase ptmS, found in Penicillium ochrochloron.